Consider the following 112-residue polypeptide: uncharacterized protein (112 aa).

Coiled-coil stretches lie at residues 15-53 and 86-103; these read AEKK…FFKF and LDYE…TERK.

This is an uncharacterized protein from Aquifex aeolicus (strain VF5).